A 514-amino-acid chain; its full sequence is Adenylosuccinate synthetase 1, chloroplastic (514 aa).

The N-terminal 73 residues, 1–73, are a transit peptide targeting the chloroplast; it reads MAMAAAAAVA…AQAIERESVK (73 aa). Residues 100–106 and 128–130 contribute to the GTP site; these read GDEGKGK and GHT. The active-site Proton acceptor is the Asp101. The Mg(2+) site is built by Asp101 and Gly128. Residues 101–104, 126–129, Thr218, Arg232, Gln312, Thr327, and Arg391 contribute to the IMP site; these read DEGK and NAGH. His129 functions as the Proton donor in the catalytic mechanism. Substrate is bound at residue 387–393; the sequence is TTTGRPR. Residues Arg393, 419 to 421, and 502 to 504 each bind GTP; these read KLD and GVG.

This sequence belongs to the adenylosuccinate synthetase family. As to quaternary structure, homodimer. Mg(2+) serves as cofactor.

The protein resides in the plastid. Its subcellular location is the chloroplast. It catalyses the reaction IMP + L-aspartate + GTP = N(6)-(1,2-dicarboxyethyl)-AMP + GDP + phosphate + 2 H(+). The protein operates within purine metabolism; AMP biosynthesis via de novo pathway; AMP from IMP: step 1/2. Plays an important role in the de novo pathway and in the salvage pathway of purine nucleotide biosynthesis. Catalyzes the first committed step in the biosynthesis of AMP from IMP. The sequence is that of Adenylosuccinate synthetase 1, chloroplastic from Physcomitrium patens (Spreading-leaved earth moss).